The following is a 2156-amino-acid chain: Probable capsid protein 3 (2156 aa).

A disordered region spans residues 1319 to 1345 (NKSNKSNKSNESDKSSESDKSSESSNH). Basic and acidic residues predominate over residues 1326-1345 (KSNESDKSSESDKSSESSNH).

It belongs to the NCLDV major capsid protein family.

The protein resides in the virion. The sequence is that of Probable capsid protein 3 from Acanthamoeba polyphaga mimivirus (APMV).